The chain runs to 285 residues: UPF0354 protein SACOL1793 (285 aa).

The protein belongs to the UPF0354 family.

In Staphylococcus aureus (strain COL), this protein is UPF0354 protein SACOL1793.